A 445-amino-acid polypeptide reads, in one-letter code: Exodeoxyribonuclease 7 large subunit (445 aa).

This sequence belongs to the XseA family. In terms of assembly, heterooligomer composed of large and small subunits.

The protein localises to the cytoplasm. It catalyses the reaction Exonucleolytic cleavage in either 5'- to 3'- or 3'- to 5'-direction to yield nucleoside 5'-phosphates.. Functionally, bidirectionally degrades single-stranded DNA into large acid-insoluble oligonucleotides, which are then degraded further into small acid-soluble oligonucleotides. In Shewanella pealeana (strain ATCC 700345 / ANG-SQ1), this protein is Exodeoxyribonuclease 7 large subunit.